We begin with the raw amino-acid sequence, 69 residues long: Conopeptide Y-Fe1 (69 aa).

A signal peptide spans 1 to 20 (MSKLGVVLFVFLLLLPLAAP). Residues 21–69 (QPVGDQPADQPADRNAEARGTYLYPFSYYRLWRYFTRFLHKQPYYYVHI) constitute a propeptide that is removed on maturation.

It belongs to the conotoxin M superfamily. Conopeptide Y family. In terms of tissue distribution, expressed by the venom duct.

The protein resides in the secreted. Its function is as follows. Tyrosine-rich conopeptide that specifically targets voltage-gated potassium channel Kv1.6/KCNA6 (IC(50) is 8.8 uM) that is expressed in Xenopus oocytes. In vivo, causes seizures (at 5 nmol) and death (20 nmol) when intracranially injected into mice, and causes paralysis (at 10 pmol) to C.elegans. In Conus ferrugineus (Cone snail), this protein is Conopeptide Y-Fe1.